A 101-amino-acid chain; its full sequence is Small ribosomal subunit protein uS14 (101 aa).

This sequence belongs to the universal ribosomal protein uS14 family. Part of the 30S ribosomal subunit. Contacts proteins S3 and S10.

Its function is as follows. Binds 16S rRNA, required for the assembly of 30S particles and may also be responsible for determining the conformation of the 16S rRNA at the A site. This chain is Small ribosomal subunit protein uS14, found in Chromohalobacter salexigens (strain ATCC BAA-138 / DSM 3043 / CIP 106854 / NCIMB 13768 / 1H11).